The primary structure comprises 388 residues: Na(+)/H(+) antiporter NhaA (388 aa).

The next 12 membrane-spanning stretches (helical) occupy residues 8–28, 33–53, 59–79, 95–115, 125–145, 154–174, 179–199, 217–237, 259–279, 287–307, 328–348, and 363–383; these read FLKLEAAGGLLLIITAIIALI, PLQGIYQQFLNISVAVQFAAL, LLLWINDGLMAVFFLIVGLEV, LFPVIAAIGGMVAPALIYLLF, GWAIPAATDIAFALGVMALLS, VFLLALAIIDDLGVIVIIALF, VSLVALGLSAAMIALLVWMNW, VCILKSGVHATLAGVIVGFLI, VAYLILPLFAFANAGVALNGV, ILPLGIAVALFLGKPLGIFLF, IFAVSVLCGIGFTMSIFISGL, and LGILMGSTIAAFMGYGLLRMV.

Belongs to the NhaA Na(+)/H(+) (TC 2.A.33) antiporter family.

The protein resides in the cell inner membrane. It catalyses the reaction Na(+)(in) + 2 H(+)(out) = Na(+)(out) + 2 H(+)(in). Na(+)/H(+) antiporter that extrudes sodium in exchange for external protons. In Photorhabdus laumondii subsp. laumondii (strain DSM 15139 / CIP 105565 / TT01) (Photorhabdus luminescens subsp. laumondii), this protein is Na(+)/H(+) antiporter NhaA.